The following is a 364-amino-acid chain: Peptide chain release factor 1 (364 aa).

Residue Q232 is modified to N5-methylglutamine.

It belongs to the prokaryotic/mitochondrial release factor family. Methylated by PrmC. Methylation increases the termination efficiency of RF1.

Its subcellular location is the cytoplasm. In terms of biological role, peptide chain release factor 1 directs the termination of translation in response to the peptide chain termination codons UAG and UAA. The protein is Peptide chain release factor 1 of Sorangium cellulosum (strain So ce56) (Polyangium cellulosum (strain So ce56)).